We begin with the raw amino-acid sequence, 171 residues long: Neuronal vesicle trafficking-associated protein 2 (171 aa).

The disordered stretch occupies residues 1 to 21 (MVKLNSNPSEKGAKPPSVEDG). The Cytoplasmic portion of the chain corresponds to 1 to 71 (MVKLNSNPSE…FRVPKIAEFT (71 aa)). The chain crosses the membrane as a helical; Signal-anchor for type II membrane protein span at residues 72 to 92 (VTILVSLALAFLACIVFLVVY). At 93–171 (KAFTYDHSCP…EPKPPKTQGH (79 aa)) the chain is on the lumenal side.

This sequence belongs to the NSG family.

It is found in the membrane. Its subcellular location is the golgi apparatus. The protein localises to the trans-Golgi network membrane. It localises to the cell projection. The protein resides in the dendrite. It is found in the endosome membrane. Its subcellular location is the early endosome membrane. The protein localises to the late endosome membrane. It localises to the lysosome lumen. The protein resides in the cytoplasmic vesicle membrane. It is found in the golgi stack membrane. Its subcellular location is the endosome. The protein localises to the multivesicular body membrane. The protein is Neuronal vesicle trafficking-associated protein 2 of Bos taurus (Bovine).